The following is a 138-amino-acid chain: Molluscan insulin-related peptide 5 (138 aa).

The signal sequence occupies residues 1–31 (MAGVRLVFTKAFMVTVLLTLLLNIGVKPAEG). Residue glutamine 32 is modified to Pyrrolidone carboxylic acid. Disulfide bonds link cysteine 48–cysteine 124, cysteine 60–cysteine 137, and cysteine 123–cysteine 128. Residues 72–84 (DAETGWLLPETMV) constitute a propeptide, C-beta peptide like. Residues 87-111 (NAQTDLDDPLRNIKLSSESALTYLT) constitute a propeptide, C-alpha peptide like. Residue glutamine 114 is modified to Pyrrolidone carboxylic acid.

It belongs to the insulin family. In terms of assembly, heterodimer of a B chain and an A chain linked by two disulfide bonds. Expressed in the cerebral light-green cells which are giant neuroendocrines cells involved in the control of growth.

It is found in the cytoplasmic vesicle. The protein resides in the secretory vesicle. This is Molluscan insulin-related peptide 5 from Lymnaea stagnalis (Great pond snail).